The sequence spans 170 residues: Large ribosomal subunit protein uL6m (170 aa).

This sequence belongs to the universal ribosomal protein uL6 family.

The protein localises to the mitochondrion. The protein is Large ribosomal subunit protein uL6m (mrpl6) of Dictyostelium discoideum (Social amoeba).